The following is a 176-amino-acid chain: Ribosome maturation factor RimM (176 aa).

The 74-residue stretch at 93 to 166 (EGEYYHADLI…RVVIELPAEI (74 aa)) folds into the PRC barrel domain.

The protein belongs to the RimM family. Binds ribosomal protein uS19.

Its subcellular location is the cytoplasm. An accessory protein needed during the final step in the assembly of 30S ribosomal subunit, possibly for assembly of the head region. Essential for efficient processing of 16S rRNA. May be needed both before and after RbfA during the maturation of 16S rRNA. It has affinity for free ribosomal 30S subunits but not for 70S ribosomes. The protein is Ribosome maturation factor RimM of Rhodopseudomonas palustris (strain BisB18).